Consider the following 1610-residue polypeptide: E3 ubiquitin-protein ligase listerin (1610 aa).

A compositionally biased stretch (basic and acidic residues) spans 1–10 (MKKKSTDLYG). The disordered stretch occupies residues 1–20 (MKKKSTDLYGRKNPGMQSMS). HEAT repeat units follow at residues 110–148 (LKIFVFMSVLSSALQKKLAPWLKFYITPWVMGFFDSDRA), 314–351 (VPMLRLLSNMISNFPNEVHQFANDSKRPLSKLFSNLIT), 372–408 (IGAMQLVPSIESVDELCDAFLETANQEQRFLSTEVYD), 409–443 (CLLNFLSFVYTDSSDPQIKDHVRDRLRTIFTRYFK), 590–626 (SPAFTLLRDILLLLKDYADLSEPWENVANQFTVSFDE), 627–664 (LENIRVLNSLPSLFADGKLRGKISLVKTLVEYYDTAVF), 736–773 (KSLYSLLPVILFSKPEDDGHVAAHFESIFSLLKEKALE), 965–1003 (GKMPVLFKRFKNLSSAENTTSFSIFAAQGLTDFLIVVSN), 1119–1156 (CCFLRFMYYFLPTVFSLSGSYWNSIFDYIKYAMKMSVV), 1322–1354 (RVYLLVWDLIFYHFEETTYNIKLSIINQLHAMD), 1355–1393 (LLRPLLNTLVEILNLSYDRPINVDKYPKIDYNLMDYSSA), and 1435–1473 (FTGYNVSPLLISASLDDVERSIESEDFQSVGDVNVKVNR). The RING-type; atypical zinc finger occupies 1558-1604 (CAICYSVLSVERTLPNKRCGTCRHKFHASCLYKWFKSSNSSRCPLCR).

The protein belongs to the LTN1 family. As to quaternary structure, component of the ribosome quality control complex (RQC), composed of the E3 ubiquitin ligase rkr1/ltn1, rqc1 and mtr1/rqc2, as well as cdc48 and its ubiquitin-binding cofactors. RQC forms a stable complex with 60S ribosomal subunits.

It is found in the nucleus. Its subcellular location is the cytoplasm. It localises to the cytosol. The catalysed reaction is S-ubiquitinyl-[E2 ubiquitin-conjugating enzyme]-L-cysteine + [acceptor protein]-L-lysine = [E2 ubiquitin-conjugating enzyme]-L-cysteine + N(6)-ubiquitinyl-[acceptor protein]-L-lysine.. The protein operates within protein modification; protein ubiquitination. In terms of biological role, E3 ubiquitin-protein ligase component of the ribosome quality control complex (RQC), a ribosome-associated complex that mediates ubiquitination and extraction of incompletely synthesized nascent chains for proteasomal degradation. Mediates ubiquitination of proteins derived from mRNAs lacking stop codons (non-stop proteins) and other translation arrest products induced by poly-lysine sequences and tandem rare codons. Ubiquitination leads to cdc48 recruitment for extraction and degradation of the incomplete translation product. May indirectly play a role in chromatin function and transcription. In Schizosaccharomyces pombe (strain 972 / ATCC 24843) (Fission yeast), this protein is E3 ubiquitin-protein ligase listerin.